Here is a 1088-residue protein sequence, read N- to C-terminus: DNA damage-binding protein 1b (1088 aa).

The protein belongs to the DDB1 family. In terms of assembly, interacts with DDA1. Binds to KTN80.2/DWA3. Interacts with HTD1.

It localises to the nucleus. The protein operates within protein modification; protein ubiquitination. Component of light signal transduction machinery. Involved in repression of photomorphogenesis in darkness. Plays a role in DNA repair by forming with DDB2 the UV-damaged DNA-binding protein complex (UV-DDB). The chain is DNA damage-binding protein 1b from Arabidopsis thaliana (Mouse-ear cress).